The chain runs to 311 residues: tRNA-cytidine(32) 2-sulfurtransferase (311 aa).

The interval 18–38 (KVGADHGPSEENGSSHPLFDN) is disordered. The PP-loop motif signature appears at 77–82 (SGGKDS). Cys-152, Cys-155, and Cys-243 together coordinate [4Fe-4S] cluster.

It belongs to the TtcA family. Homodimer. It depends on Mg(2+) as a cofactor. [4Fe-4S] cluster is required as a cofactor.

It is found in the cytoplasm. The catalysed reaction is cytidine(32) in tRNA + S-sulfanyl-L-cysteinyl-[cysteine desulfurase] + AH2 + ATP = 2-thiocytidine(32) in tRNA + L-cysteinyl-[cysteine desulfurase] + A + AMP + diphosphate + H(+). It functions in the pathway tRNA modification. Catalyzes the ATP-dependent 2-thiolation of cytidine in position 32 of tRNA, to form 2-thiocytidine (s(2)C32). The sulfur atoms are provided by the cysteine/cysteine desulfurase (IscS) system. This is tRNA-cytidine(32) 2-sulfurtransferase from Agrobacterium fabrum (strain C58 / ATCC 33970) (Agrobacterium tumefaciens (strain C58)).